Reading from the N-terminus, the 399-residue chain is DNA polymerase IV (399 aa).

In terms of domain architecture, UmuC spans 5 to 187 (ILHCDLNNFY…LPVEALLYVG (183 aa)). Mg(2+) is bound by residues Asp-9 and Asp-105. Glu-106 is a catalytic residue.

It belongs to the DNA polymerase type-Y family. As to quaternary structure, monomer. The cofactor is Mg(2+).

Its subcellular location is the cytoplasm. The catalysed reaction is DNA(n) + a 2'-deoxyribonucleoside 5'-triphosphate = DNA(n+1) + diphosphate. In terms of biological role, poorly processive, error-prone DNA polymerase involved in untargeted mutagenesis. Copies undamaged DNA at stalled replication forks, which arise in vivo from mismatched or misaligned primer ends. These misaligned primers can be extended by PolIV. Exhibits no 3'-5' exonuclease (proofreading) activity. May be involved in translesional synthesis, in conjunction with the beta clamp from PolIII. The polypeptide is DNA polymerase IV (Acetivibrio thermocellus (strain ATCC 27405 / DSM 1237 / JCM 9322 / NBRC 103400 / NCIMB 10682 / NRRL B-4536 / VPI 7372) (Clostridium thermocellum)).